The primary structure comprises 276 residues: 2,3,4,5-tetrahydropyridine-2,6-dicarboxylate N-succinyltransferase (276 aa).

Substrate-binding residues include arginine 104 and aspartate 141.

Belongs to the transferase hexapeptide repeat family. In terms of assembly, homotrimer.

It localises to the cytoplasm. The enzyme catalyses (S)-2,3,4,5-tetrahydrodipicolinate + succinyl-CoA + H2O = (S)-2-succinylamino-6-oxoheptanedioate + CoA. It functions in the pathway amino-acid biosynthesis; L-lysine biosynthesis via DAP pathway; LL-2,6-diaminopimelate from (S)-tetrahydrodipicolinate (succinylase route): step 1/3. In Legionella pneumophila (strain Paris), this protein is 2,3,4,5-tetrahydropyridine-2,6-dicarboxylate N-succinyltransferase.